The primary structure comprises 406 residues: Phosphatidylserine decarboxylase proenzyme, mitochondrial (406 aa).

A mitochondrion-targeting transit peptide spans 1-49; it reads MAVAGGRGCVRSLREGVLWRSSPCHCDYTATRHFLGALQKLPLQAWVRK. Topologically, residues 50–60 are mitochondrial matrix; it reads VHTAPLRTLFL. The chain crosses the membrane as a helical span at residues 61–79; sequence LRPVPILLAAGGGYAGYRQ. Over 80 to 406 the chain is Mitochondrial intermembrane; the sequence is YEKYRERQLE…ILFGEALGSL (327 aa). Residues Asp-188, His-264, and Ser-375 each act as charge relay system; for autoendoproteolytic cleavage activity in the active site. The Schiff-base intermediate with substrate; via pyruvic acid; for decarboxylase activity role is filled by Ser-375. The residue at position 375 (Ser-375) is a Pyruvic acid (Ser); by autocatalysis.

This sequence belongs to the phosphatidylserine decarboxylase family. PSD-B subfamily. Eukaryotic type I sub-subfamily. Heterodimer of a large membrane-associated beta subunit and a small pyruvoyl-containing alpha subunit. Requires pyruvate as cofactor. Post-translationally, is synthesized initially as an inactive proenzyme. Formation of the active enzyme involves a self-maturation process in which the active site pyruvoyl group is generated from an internal serine residue via an autocatalytic post-translational modification. Two non-identical subunits are generated from the proenzyme in this reaction, and the pyruvate is formed at the N-terminus of the alpha chain, which is derived from the carboxyl end of the proenzyme. The autoendoproteolytic cleavage occurs by a canonical serine protease mechanism, in which the side chain hydroxyl group of the serine supplies its oxygen atom to form the C-terminus of the beta chain, while the remainder of the serine residue undergoes an oxidative deamination to produce ammonia and the pyruvoyl prosthetic group on the alpha chain. During this reaction, the Ser that is part of the protease active site of the proenzyme becomes the pyruvoyl prosthetic group, which constitutes an essential element of the active site of the mature decarboxylase.

Its subcellular location is the mitochondrion inner membrane. The protein resides in the cytoplasm. The protein localises to the lipid droplet. The enzyme catalyses a 1,2-diacyl-sn-glycero-3-phospho-L-serine + H(+) = a 1,2-diacyl-sn-glycero-3-phosphoethanolamine + CO2. The protein operates within phospholipid metabolism; phosphatidylethanolamine biosynthesis. Inhibited by hydroxylamine. Its function is as follows. Catalyzes the formation of phosphatidylethanolamine (PtdEtn) from phosphatidylserine (PtdSer). Plays a central role in phospholipid metabolism and in the interorganelle trafficking of phosphatidylserine. May be involved in lipid droplet biogenesis at the endoplasmic reticulum membrane. This chain is Phosphatidylserine decarboxylase proenzyme, mitochondrial, found in Rattus norvegicus (Rat).